The primary structure comprises 182 residues: DOMON domain-containing protein Y73F4A.1 (182 aa).

The N-terminal stretch at 1–18 is a signal peptide; it reads MFVLAIVFAFVFIPSSSS. Residues 26–143 enclose the DOMON domain; it reads ELVSMNWNVK…CLNWMVVPGG (118 aa). N-linked (GlcNAc...) asparagine glycans are attached at residues asparagine 47 and asparagine 128.

The protein resides in the secreted. The sequence is that of DOMON domain-containing protein Y73F4A.1 from Caenorhabditis elegans.